Consider the following 62-residue polypeptide: MQCCNQQSSQPKTTTTCPGGVSSCYKKTWRDHRGTIIERGCGCPRVKPGIRLICCKTDECNN.

Over residues 1-17 (MQCCNQQSSQPKTTTTC) the composition is skewed to polar residues. The segment at 1-20 (MQCCNQQSSQPKTTTTCPGG) is disordered. 4 disulfide bridges follow: cysteine 3–cysteine 24, cysteine 17–cysteine 41, cysteine 43–cysteine 54, and cysteine 55–cysteine 60.

It belongs to the three-finger toxin family. Short-chain subfamily. Type I alpha-neurotoxin sub-subfamily. As to expression, expressed by the venom gland.

It is found in the secreted. In terms of biological role, binds to muscle nicotinic acetylcholine receptor (nAChR) and inhibit acetylcholine from binding to the receptor, thereby impairing neuromuscular transmission. This chain is Short neurotoxin 1, found in Acanthophis antarcticus (Common death adder).